Reading from the N-terminus, the 655-residue chain is Putative esterase (655 aa).

A helical membrane pass occupies residues 9-29 (VLSLTLIYISISIGFSVYFYV). N-linked (GlcNAc...) asparagine; by host glycans are attached at residues Asn71, Asn89, Asn101, Asn185, Asn386, Asn449, and Asn512. Residue His515 is the Charge relay system of the active site. Residues Asn527 and Asn597 are each glycosylated (N-linked (GlcNAc...) asparagine; by host).

This sequence belongs to the type-B carboxylesterase/lipase family.

The protein localises to the membrane. The enzyme catalyses a carboxylic ester + H2O = an alcohol + a carboxylate + H(+). This is Putative esterase from Noctuidae (owlet moths).